The primary structure comprises 861 residues: Leucine--tRNA ligase (861 aa).

Positions 42 to 52 match the 'HIGH' region motif; the sequence is PYPSGNLHMGH. Positions 620-624 match the 'KMSKS' region motif; the sequence is KMSKS. Position 623 (Lys623) interacts with ATP.

It belongs to the class-I aminoacyl-tRNA synthetase family.

It localises to the cytoplasm. The enzyme catalyses tRNA(Leu) + L-leucine + ATP = L-leucyl-tRNA(Leu) + AMP + diphosphate. This chain is Leucine--tRNA ligase, found in Baumannia cicadellinicola subsp. Homalodisca coagulata.